Reading from the N-terminus, the 445-residue chain is Phosphoglucosamine mutase (445 aa).

Serine 102 (phosphoserine intermediate) is an active-site residue. Mg(2+) contacts are provided by serine 102, aspartate 241, aspartate 243, and aspartate 245. At serine 102 the chain carries Phosphoserine.

It belongs to the phosphohexose mutase family. Mg(2+) is required as a cofactor. Activated by phosphorylation.

It carries out the reaction alpha-D-glucosamine 1-phosphate = D-glucosamine 6-phosphate. Its function is as follows. Catalyzes the conversion of glucosamine-6-phosphate to glucosamine-1-phosphate. The polypeptide is Phosphoglucosamine mutase (Hahella chejuensis (strain KCTC 2396)).